Reading from the N-terminus, the 293-residue chain is Probable flavonol synthase 6 (293 aa).

One can recognise a Fe2OG dioxygenase domain in the interval 156–253 (KAQYVMRINY…RMSWPILVEP (98 aa)). A 2-oxoglutarate-binding site is contributed by 164 to 166 (NYY). Fe cation-binding residues include histidine 178, aspartate 180, and histidine 234. 244–246 (RMS) serves as a coordination point for 2-oxoglutarate.

The protein belongs to the iron/ascorbate-dependent oxidoreductase family. Fe(2+) serves as cofactor.

It carries out the reaction a (2R,3R)-dihydroflavonol + 2-oxoglutarate + O2 = a flavonol + succinate + CO2 + H2O. Its pathway is secondary metabolite biosynthesis; flavonoid biosynthesis. The polypeptide is Probable flavonol synthase 6 (FLS6) (Arabidopsis thaliana (Mouse-ear cress)).